The chain runs to 57 residues: uncharacterized protein (57 aa).

The disordered stretch occupies residues 31 to 57 (HHQTSSFNPMPSEVSLHTSHNFPHTTF). A compositionally biased stretch (polar residues) spans 33–57 (QTSSFNPMPSEVSLHTSHNFPHTTF).

This is an uncharacterized protein from Invertebrate iridescent virus 6 (IIV-6).